Here is a 575-residue protein sequence, read N- to C-terminus: Manganese transporter SMF1 (575 aa).

At 1 to 70 (MVNVGPSHAA…TYVSKRQVMR (70 aa)) the chain is on the extracellular side. Ser-24 carries the phosphoserine modification. Residues Lys-33 and Lys-34 each participate in a glycyl lysine isopeptide (Lys-Gly) (interchain with G-Cter in ubiquitin) cross-link. The chain crosses the membrane as a helical span at residues 71 to 91 (DIFAKYLKFIGPGLMVSVAYI). Residues 92-108 (DPGNYSTAVDAGASNQF) lie on the Cytoplasmic side of the membrane. A helical membrane pass occupies residues 109–129 (SLLCIILLSNFIAIFLQCLCI). Over 130–156 (KLGSVTGLDLSRACREYLPRWLNWTLY) the chain is Extracellular. A helical transmembrane segment spans residues 157–177 (FFAECAVIATDIAEVIGTAIA). The Cytoplasmic portion of the chain corresponds to 178–179 (LN). A helical membrane pass occupies residues 180–200 (ILIKVPLPAGVAITVVDVFLI). Over 201–218 (MFTYKPGASSIRFIRIFE) the chain is Extracellular. The helical transmembrane segment at 219-239 (CFVAVLVVGVCICFAIELAYI) threads the bilayer. Residues 240 to 266 (PKSTSVKQVFRGFVPSAQMFDHNGIYT) lie on the Cytoplasmic side of the membrane. A helical transmembrane segment spans residues 267–287 (AISILGATVMPHSLFLGSALV). At 288-344 (QPRLLDYDVKHGNYTVSEEQDKVKKSKSTEEIMEEKYFNYRPTNAAIKYCMKYSMVE) the chain is on the extracellular side. A helical membrane pass occupies residues 345 to 365 (LSITLFTLALFVNCAILVVAG). The Cytoplasmic portion of the chain corresponds to 366–396 (STLYNSPEADGADLFTIHELLSRNLAPAAGT). The chain crosses the membrane as a helical span at residues 397–417 (IFMLALLLSGQSAGVVCTMSG). Over 418–463 (QIVSEGHINWKLQPWQRRLATRCISIIPCLVISICIGREALSKALN) the chain is Extracellular. Residues 464-484 (ASQVVLSIVLPFLVAPLIFFT) traverse the membrane as a helical segment. Residues 485-543 (CKKSIMKTEITVDHTEEDSHNHQNNNDRSAGSVIEQDGSSGMEIENGKDVKIVYMANNW) lie on the Cytoplasmic side of the membrane. A disordered region spans residues 498–517 (HTEEDSHNHQNNNDRSAGSV). Residues 544–564 (IITVIAIIVWLFLSLLNVYAI) form a helical membrane-spanning segment. The Extracellular segment spans residues 565 to 575 (VQLGMSHGDIS).

Belongs to the NRAMP family.

It localises to the cell membrane. The catalysed reaction is Mn(2+)(in) = Mn(2+)(out). In terms of biological role, high-affinity manganese transporter involved in manganese uptake from the extracellular environment. Also contributes to cellular accumulation of other divalent metal ions such as cadmium, cobalt, copper, iron and nickel. The protein is Manganese transporter SMF1 (SMF1) of Saccharomyces cerevisiae (strain ATCC 204508 / S288c) (Baker's yeast).